Consider the following 105-residue polypeptide: Ketoisovalerate oxidoreductase subunit VorD (105 aa).

2 consecutive 4Fe-4S ferredoxin-type domains span residues 44-73 and 74-103; these read FMPVIDESKCVKCYICWKYCPEPAIYIKED and GFVAIDYDYCKGCGICANECPTKAITMVRE. Residues cysteine 53, cysteine 56, cysteine 59, cysteine 63, cysteine 83, cysteine 86, cysteine 89, and cysteine 93 each contribute to the [4Fe-4S] cluster site.

In terms of assembly, heterotetramer of one alpha, one beta, one delta and one gamma chain. It depends on [4Fe-4S] cluster as a cofactor.

The enzyme catalyses 3-methyl-2-oxobutanoate + 2 oxidized [2Fe-2S]-[ferredoxin] + CoA = 2-methylpropanoyl-CoA + 2 reduced [2Fe-2S]-[ferredoxin] + CO2 + H(+). The protein is Ketoisovalerate oxidoreductase subunit VorD (vorD) of Pyrococcus horikoshii (strain ATCC 700860 / DSM 12428 / JCM 9974 / NBRC 100139 / OT-3).